The chain runs to 141 residues: 3-hydroxyacyl-[acyl-carrier-protein] dehydratase FabZ (141 aa).

H47 is an active-site residue.

This sequence belongs to the thioester dehydratase family. FabZ subfamily.

The protein resides in the cytoplasm. It catalyses the reaction a (3R)-hydroxyacyl-[ACP] = a (2E)-enoyl-[ACP] + H2O. In terms of biological role, involved in unsaturated fatty acids biosynthesis. Catalyzes the dehydration of short chain beta-hydroxyacyl-ACPs and long chain saturated and unsaturated beta-hydroxyacyl-ACPs. This Caldanaerobacter subterraneus subsp. tengcongensis (strain DSM 15242 / JCM 11007 / NBRC 100824 / MB4) (Thermoanaerobacter tengcongensis) protein is 3-hydroxyacyl-[acyl-carrier-protein] dehydratase FabZ.